A 157-amino-acid chain; its full sequence is Small ribosomal subunit protein uS7 (157 aa).

The protein belongs to the universal ribosomal protein uS7 family. Part of the 30S ribosomal subunit. Contacts proteins S9 and S11.

One of the primary rRNA binding proteins, it binds directly to 16S rRNA where it nucleates assembly of the head domain of the 30S subunit. Is located at the subunit interface close to the decoding center, probably blocks exit of the E-site tRNA. This is Small ribosomal subunit protein uS7 from Borrelia duttonii (strain Ly).